Here is a 360-residue protein sequence, read N- to C-terminus: Variable large protein 14 (360 aa).

Positions Met1–Ser18 are cleaved as a signal peptide. Cys19 is lipidated: N-palmitoyl cysteine. The S-diacylglycerol cysteine moiety is linked to residue Cys19.

This sequence belongs to the variable large protein (Vlp) family. Beta subfamily.

The protein localises to the cell outer membrane. Functionally, the Vlp and Vsp proteins are antigenically distinct proteins, only one vlp or vsp gene is transcriptionally active at any one time. Switching between these genes is a mechanism of host immune response evasion. This is Variable large protein 14 from Borrelia hermsii.